We begin with the raw amino-acid sequence, 159 residues long: Riboflavin kinase (159 aa).

38 to 43 is a binding site for CDP; sequence GLGEGR. Mg(2+) is bound by residues threonine 67 and asparagine 69. 2 residues coordinate FMN: threonine 126 and glutamate 134. Residue 139–142 coordinates CDP; sequence HKLR.

The protein belongs to the archaeal riboflavin kinase family. Mg(2+) serves as cofactor.

The enzyme catalyses riboflavin + CTP = CDP + FMN + H(+). Its pathway is cofactor biosynthesis; FMN biosynthesis; FMN from riboflavin (CTP route): step 1/1. Its function is as follows. Catalyzes the CTP-dependent phosphorylation of riboflavin (vitamin B2) to form flavin mononucleotide (FMN). The sequence is that of Riboflavin kinase from Sulfolobus acidocaldarius (strain ATCC 33909 / DSM 639 / JCM 8929 / NBRC 15157 / NCIMB 11770).